Consider the following 2349-residue polypeptide: Reducing polyketide synthase AFT16-1 (2349 aa).

Basic and acidic residues predominate over residues 1–14 (MNGKSRDNGHDGKR). Disordered regions lie at residues 1-21 (MNGK…VPAE) and 37-80 (TNPS…TSNS). Residues 20–462 (AEPIAIVGTA…GTNAHTILES (443 aa)) enclose the Ketosynthase family 3 (KS3) domain. Active-site for beta-ketoacyl synthase activity residues include cysteine 194, histidine 333, and histidine 382. Positions 578–888 (VFTGQGAQWP…LLYKGVLERF (311 aa)) are malonyl-CoA:ACP transacylase (MAT) domain. Residues 958–1092 (HPLLGFRSVD…GDILLSHFAK (135 aa)) are N-terminal hotdog fold. Residues 958 to 1263 (HPLLGFRSVD…QVEGLKFSCM (306 aa)) form a dehydratase (DH) domain region. The region spanning 958–1269 (HPLLGFRSVD…FSCMYPAQET (312 aa)) is the PKS/mFAS DH domain. Residue histidine 990 is the Proton acceptor; for dehydratase activity of the active site. The C-terminal hotdog fold stretch occupies residues 1111–1269 (MSSVEPSLFY…FSCMYPAQET (159 aa)). Aspartate 1170 acts as the Proton donor; for dehydratase activity in catalysis. Residues 1976–2164 (SPNKTYLLVG…VVGVGYVARA (189 aa)) form a ketoreductase (KR) domain region. The Carrier domain occupies 2273–2347 (EILSGSLKQK…GLCLEAIGQW (75 aa)). An O-(pantetheine 4'-phosphoryl)serine modification is found at serine 2307.

It functions in the pathway mycotoxin biosynthesis. Functionally, reducing polyketide synthase; part of the gene clusters that mediate the biosynthesis of the host-selective toxins (HSTs) AF-toxins responsible for Alternaria black spot of strawberry disease by the strawberry pathotype. AF-toxin I and III are valine derivatives of 2,3-dyhydroxy-isovaleric acid and 2-hydroxy-isovaleric acid respectively, while AF II is an isoleucine derivative of 2-hydroxy-valeric acid. These derivatives are bound to a 9,10-epoxy-8-hydroxy-9-methyl-decatrienoic acid (EDA) moiety. On cellular level, AF-toxins affect plasma membrane of susceptible cells and cause a sudden increase in loss of K(+) after a few minutes of toxin treatment. The aldo-keto reductase AFTS1 catalyzes the conversion of 2-keto-isovaleric acid (2-KIV) to 2-hydroxy-isovaleric acid (2-HIV) by reduction of its ketone to an alcohol. The acyl-CoA ligase AFT1, the hydrolase AFT2 and the enoyl-CoA hydratases AFT3 and AFT6, but also the polyketide synthase AFT9, the acyl-CoA dehydrogenase AFT10, the cytochrome P450 monooxygenase AFT11 and the oxidoreductase AFT12 are all involved in the biosynthesis of the AK-, AF- and ACT-toxin common EDA structural moiety. The exact function of each enzyme, and of additional enzymes identified within the AF-toxin clusters have still to be determined. The sequence is that of Reducing polyketide synthase AFT16-1 from Alternaria alternata (Alternaria rot fungus).